The following is a 126-amino-acid chain: MDKTLKFTESHEWVRDNGDGTVTIGISEHAQEMLGDVVFVELPEIDAEIDAGDSFSLVESVKAASDIYAPVTGVVIEVNEDLQNSPELINEEPYDGGWIVKVKMSDPDELKDLKDAEEYLASIEED.

Positions 21 to 103 (TVTIGISEHA…YDGGWIVKVK (83 aa)) constitute a Lipoyl-binding domain. Position 62 is an N6-lipoyllysine (Lys-62).

The protein belongs to the GcvH family. The glycine cleavage system is composed of four proteins: P, T, L and H. (R)-lipoate serves as cofactor.

In terms of biological role, the glycine cleavage system catalyzes the degradation of glycine. The H protein shuttles the methylamine group of glycine from the P protein to the T protein. In Vibrio cholerae serotype O1 (strain ATCC 39541 / Classical Ogawa 395 / O395), this protein is Glycine cleavage system H protein.